Here is a 191-residue protein sequence, read N- to C-terminus: 7-methyl-GTP pyrophosphatase (191 aa).

Asp-70 acts as the Proton acceptor in catalysis.

Belongs to the Maf family. YceF subfamily. Requires a divalent metal cation as cofactor.

It is found in the cytoplasm. The enzyme catalyses N(7)-methyl-GTP + H2O = N(7)-methyl-GMP + diphosphate + H(+). Functionally, nucleoside triphosphate pyrophosphatase that hydrolyzes 7-methyl-GTP (m(7)GTP). May have a dual role in cell division arrest and in preventing the incorporation of modified nucleotides into cellular nucleic acids. This is 7-methyl-GTP pyrophosphatase from Xanthomonas oryzae pv. oryzae (strain KACC10331 / KXO85).